The primary structure comprises 240 residues: Protein MGARP (240 aa).

Residues 1 to 40 are Cytoplasmic-facing; the sequence is MYLRRAVSKTLALPLRAPPNPAPLGKDASLRRMSSNRFPG. Residues 41-63 traverse the membrane as a helical; Anchor for type IV membrane protein segment; that stretch reads SSGSNMIYYLVVGVTVSAGGYYA. The Mitochondrial intermembrane segment spans residues 64-240; that stretch reads YKTVTSDQAK…VGSEAASAQG (177 aa). Positions 166 to 240 are disordered; it reads RETTEVNPET…VGSEAASAQG (75 aa). Positions 170 to 181 are enriched in low complexity; it reads EVNPETTPEVTN. The segment covering 191–201 has biased composition (basic and acidic residues); it reads DNDKDTTKNET. The span at 202–213 shows a compositional bias: acidic residues; the sequence is SDEYAELEEENS. The span at 228 to 240 shows a compositional bias: low complexity; the sequence is EASVGSEAASAQG.

In terms of assembly, interacts with RHOT1/Miro-1, TRAK1/OIP106 and TRAK2/GRIF1. Interacts with RHOT2/Miro-2. As to expression, expressed in the brain, adrenal gland and corneal endothelium (CE). Expressed in steroid-producing cells of the ovary and testis (at protein level). Expressed in steroid-producing cells of the ovary and testis. Weakly expressed in placenta. Expressed in corneal endothelial cells.

It is found in the mitochondrion. It localises to the mitochondrion outer membrane. Its subcellular location is the mitochondrion inner membrane. Functionally, plays a role in the trafficking of mitochondria along microtubules. Regulates the kinesin-mediated axonal transport of mitochondria to nerve terminals along microtubules during hypoxia. Participates in the translocation of TRAK2/GRIF1 from the cytoplasm to the mitochondrion. Also plays a role in steroidogenesis through maintenance of mitochondrial abundance and morphology. Plays an inhibitory role during neocortex development by regulating mitochondrial morphology, distribution and motility in neocortical neurons. The chain is Protein MGARP (MGARP) from Homo sapiens (Human).